The following is a 179-amino-acid chain: Large ribosomal subunit protein uL5 (179 aa).

The protein belongs to the universal ribosomal protein uL5 family. As to quaternary structure, part of the 50S ribosomal subunit; part of the 5S rRNA/L5/L18/L25 subcomplex. Contacts the 5S rRNA and the P site tRNA. Forms a bridge to the 30S subunit in the 70S ribosome.

This is one of the proteins that bind and probably mediate the attachment of the 5S RNA into the large ribosomal subunit, where it forms part of the central protuberance. In the 70S ribosome it contacts protein S13 of the 30S subunit (bridge B1b), connecting the 2 subunits; this bridge is implicated in subunit movement. Contacts the P site tRNA; the 5S rRNA and some of its associated proteins might help stabilize positioning of ribosome-bound tRNAs. This Bacillus anthracis (strain A0248) protein is Large ribosomal subunit protein uL5.